The primary structure comprises 500 residues: MALACLNSLNANAEIFSFDTRNSLNSDTLVLFHSADSTTYSLDFLPQSTQDQLNLAVADNSFSGKRGEVLEILVPSEIDAKRVLLVGIGDAKTLTPGEINALGGNIAAKLETVPQATVRVLTQGLNNAPLFGSELAHGIELRSYRYTQFKASNRVEKNYQIGVDDLSLNQKHHKNLQAVEAGVFLARDLTNAPAGNMYPESFANEARKLKSLGVKVTVLEAKDIERLNLGALAAVGKGSERPPKLVVAHWPGSKEAPIALVGKGITFDSGGYNIKATGTSIARMKSDMAGAATVLGTVKAMAIQKAPVNLVAIMPMAENMVSGHAMIPGDVITTAQGLTVEVLNTDAEGRLVLADGLWYARENYRPSVIIDVATLTGSKVSALGTVYAGLFTDSEPLVQQLTFAGQQVGEKVWRLPLDQAYDDELKSTIADLKNTGKEGSAGASAAAMFLKRFAGDQPWAHLDIAGHALTATDTAVVPAGATGYGVRLLSTWLTQPKAQN.

The Mn(2+) site is built by K263 and D268. K275 is a catalytic residue. Positions 287, 346, and 348 each coordinate Mn(2+). R350 is a catalytic residue.

The protein belongs to the peptidase M17 family. Mn(2+) serves as cofactor.

It is found in the cytoplasm. The enzyme catalyses Release of an N-terminal amino acid, Xaa-|-Yaa-, in which Xaa is preferably Leu, but may be other amino acids including Pro although not Arg or Lys, and Yaa may be Pro. Amino acid amides and methyl esters are also readily hydrolyzed, but rates on arylamides are exceedingly low.. The catalysed reaction is Release of an N-terminal amino acid, preferentially leucine, but not glutamic or aspartic acids.. Functionally, presumably involved in the processing and regular turnover of intracellular proteins. Catalyzes the removal of unsubstituted N-terminal amino acids from various peptides. This Shewanella oneidensis (strain ATCC 700550 / JCM 31522 / CIP 106686 / LMG 19005 / NCIMB 14063 / MR-1) protein is Probable cytosol aminopeptidase 1 (pepA1).